Here is a 405-residue protein sequence, read N- to C-terminus: Argininosuccinate synthase (405 aa).

Residues Ala-10 to Ser-18 and Ala-37 contribute to the ATP site. Residues Tyr-88 and Ser-93 each contribute to the L-citrulline site. Gly-118 lines the ATP pocket. L-aspartate-binding residues include Thr-120, Asn-124, and Asp-125. Asn-124 contacts L-citrulline. Residues Arg-128, Ser-179, Ser-188, Glu-264, and Tyr-276 each coordinate L-citrulline.

The protein belongs to the argininosuccinate synthase family. Type 1 subfamily. Homotetramer.

It is found in the cytoplasm. The catalysed reaction is L-citrulline + L-aspartate + ATP = 2-(N(omega)-L-arginino)succinate + AMP + diphosphate + H(+). It functions in the pathway amino-acid biosynthesis; L-arginine biosynthesis; L-arginine from L-ornithine and carbamoyl phosphate: step 2/3. This is Argininosuccinate synthase from Pseudomonas fluorescens (strain Pf0-1).